Here is a 273-residue protein sequence, read N- to C-terminus: HTH-type transcriptional activator RhaS (273 aa).

An HTH araC/xylS-type domain is found at 174-272 (YQLLDWLQNN…SQSPRDLRSQ (99 aa)). 2 consecutive DNA-binding regions (H-T-H motif) follow at residues 191-212 (PELADRFALPLRTLHRQLKNKT) and 239-262 (VTDIAYLCGFGDSNHFSTLFKREF).

In terms of assembly, binds DNA as a dimer.

The protein resides in the cytoplasm. Its function is as follows. Activates expression of the rhaBAD and rhaT operons. The chain is HTH-type transcriptional activator RhaS from Yersinia pseudotuberculosis serotype O:1b (strain IP 31758).